The primary structure comprises 368 residues: 2-aminoethylphosphonate--pyruvate transaminase (368 aa).

Lys192 carries the N6-(pyridoxal phosphate)lysine modification.

It belongs to the class-V pyridoxal-phosphate-dependent aminotransferase family. PhnW subfamily. In terms of assembly, homodimer. It depends on pyridoxal 5'-phosphate as a cofactor.

The enzyme catalyses (2-aminoethyl)phosphonate + pyruvate = phosphonoacetaldehyde + L-alanine. Involved in phosphonate degradation. This chain is 2-aminoethylphosphonate--pyruvate transaminase, found in Pseudomonas putida (strain ATCC 700007 / DSM 6899 / JCM 31910 / BCRC 17059 / LMG 24140 / F1).